A 940-amino-acid chain; its full sequence is Protein translocase subunit SecA (940 aa).

ATP is bound by residues Gln-85, 103-107 (GEGKT), and Asp-505. A disordered region spans residues 851 to 940 (PVQDGAERPS…KGGGGRRRKK (90 aa)). Residues 855–865 (GAERPSLEKEG) show a composition bias toward basic and acidic residues. Basic residues predominate over residues 928–940 (RRRKGGGGRRRKK).

It belongs to the SecA family. Monomer and homodimer. Part of the essential Sec protein translocation apparatus which comprises SecA, SecYEG and auxiliary proteins SecDF. Other proteins may also be involved.

The protein resides in the cell membrane. The protein localises to the cytoplasm. The enzyme catalyses ATP + H2O + cellular proteinSide 1 = ADP + phosphate + cellular proteinSide 2.. Functionally, part of the Sec protein translocase complex. Interacts with the SecYEG preprotein conducting channel. Has a central role in coupling the hydrolysis of ATP to the transfer of proteins into and across the cell membrane, serving as an ATP-driven molecular motor driving the stepwise translocation of polypeptide chains across the membrane. The protein is Protein translocase subunit SecA of Streptomyces griseus.